Consider the following 352-residue polypeptide: Elongation factor Ts (352 aa).

An involved in Mg(2+) ion dislocation from EF-Tu region spans residues 81–84 (TDFV).

It belongs to the EF-Ts family.

The protein localises to the cytoplasm. Its function is as follows. Associates with the EF-Tu.GDP complex and induces the exchange of GDP to GTP. It remains bound to the aminoacyl-tRNA.EF-Tu.GTP complex up to the GTP hydrolysis stage on the ribosome. The polypeptide is Elongation factor Ts (Campylobacter hominis (strain ATCC BAA-381 / DSM 21671 / CCUG 45161 / LMG 19568 / NCTC 13146 / CH001A)).